We begin with the raw amino-acid sequence, 1179 residues long: ATP-dependent helicase/deoxyribonuclease subunit B (1179 aa).

This sequence belongs to the helicase family. AddB/RexB type 2 subfamily. In terms of assembly, heterodimer of AddA and RexB. It depends on Mg(2+) as a cofactor.

Its function is as follows. The heterodimer acts as both an ATP-dependent DNA helicase and an ATP-dependent, dual-direction single-stranded exonuclease. Recognizes the chi site generating a DNA molecule suitable for the initiation of homologous recombination. This subunit has 5' -&gt; 3' nuclease activity but not helicase activity. The sequence is that of ATP-dependent helicase/deoxyribonuclease subunit B from Lactobacillus delbrueckii subsp. bulgaricus (strain ATCC 11842 / DSM 20081 / BCRC 10696 / JCM 1002 / NBRC 13953 / NCIMB 11778 / NCTC 12712 / WDCM 00102 / Lb 14).